Reading from the N-terminus, the 160-residue chain is Sec-independent protein translocase protein TatB (160 aa).

A helical membrane pass occupies residues 1-21; sequence MFGMGFFEILVVLVVAIIFLG. Residues 118-160 are disordered; it reads HLNEEVSNEEALNKEVSSDESPKEVQLATDNNTKEHDKEKENV. 2 stretches are compositionally biased toward basic and acidic residues: residues 128-140 and 149-160; these read ALNKEVSSDESPK and NTKEHDKEKENV.

The protein belongs to the TatB family. The Tat system comprises two distinct complexes: a TatABC complex, containing multiple copies of TatA, TatB and TatC subunits, and a separate TatA complex, containing only TatA subunits. Substrates initially bind to the TatABC complex, which probably triggers association of the separate TatA complex to form the active translocon.

It is found in the cell inner membrane. Functionally, part of the twin-arginine translocation (Tat) system that transports large folded proteins containing a characteristic twin-arginine motif in their signal peptide across membranes. Together with TatC, TatB is part of a receptor directly interacting with Tat signal peptides. TatB may form an oligomeric binding site that transiently accommodates folded Tat precursor proteins before their translocation. This Helicobacter pylori (strain ATCC 700392 / 26695) (Campylobacter pylori) protein is Sec-independent protein translocase protein TatB.